The chain runs to 476 residues: Aspartyl/glutamyl-tRNA(Asn/Gln) amidotransferase subunit B (476 aa).

This sequence belongs to the GatB/GatE family. GatB subfamily. In terms of assembly, heterotrimer of A, B and C subunits.

The catalysed reaction is L-glutamyl-tRNA(Gln) + L-glutamine + ATP + H2O = L-glutaminyl-tRNA(Gln) + L-glutamate + ADP + phosphate + H(+). It catalyses the reaction L-aspartyl-tRNA(Asn) + L-glutamine + ATP + H2O = L-asparaginyl-tRNA(Asn) + L-glutamate + ADP + phosphate + 2 H(+). Its function is as follows. Allows the formation of correctly charged Asn-tRNA(Asn) or Gln-tRNA(Gln) through the transamidation of misacylated Asp-tRNA(Asn) or Glu-tRNA(Gln) in organisms which lack either or both of asparaginyl-tRNA or glutaminyl-tRNA synthetases. The reaction takes place in the presence of glutamine and ATP through an activated phospho-Asp-tRNA(Asn) or phospho-Glu-tRNA(Gln). In Lactobacillus johnsonii (strain CNCM I-12250 / La1 / NCC 533), this protein is Aspartyl/glutamyl-tRNA(Asn/Gln) amidotransferase subunit B.